We begin with the raw amino-acid sequence, 396 residues long: 1-deoxy-D-xylulose 5-phosphate reductoisomerase (396 aa).

5 residues coordinate NADPH: Thr10, Gly11, Ser12, Ile13, and Asn123. Lys124 contributes to the 1-deoxy-D-xylulose 5-phosphate binding site. Glu125 serves as a coordination point for NADPH. A Mn(2+)-binding site is contributed by Asp149. 1-deoxy-D-xylulose 5-phosphate-binding residues include Ser150, Glu151, Ser185, and His208. Glu151 serves as a coordination point for Mn(2+). Gly214 lines the NADPH pocket. 1-deoxy-D-xylulose 5-phosphate is bound by residues Ser221, Asn226, Lys227, and Glu230. A Mn(2+)-binding site is contributed by Glu230.

The protein belongs to the DXR family. Mg(2+) is required as a cofactor. Requires Mn(2+) as cofactor.

It catalyses the reaction 2-C-methyl-D-erythritol 4-phosphate + NADP(+) = 1-deoxy-D-xylulose 5-phosphate + NADPH + H(+). It functions in the pathway isoprenoid biosynthesis; isopentenyl diphosphate biosynthesis via DXP pathway; isopentenyl diphosphate from 1-deoxy-D-xylulose 5-phosphate: step 1/6. Functionally, catalyzes the NADPH-dependent rearrangement and reduction of 1-deoxy-D-xylulose-5-phosphate (DXP) to 2-C-methyl-D-erythritol 4-phosphate (MEP). The polypeptide is 1-deoxy-D-xylulose 5-phosphate reductoisomerase (Shewanella sp. (strain MR-4)).